The primary structure comprises 218 residues: Sodium channel regulatory subunit beta-1 (218 aa).

The N-terminal stretch at 1 to 18 (MGTLLALVVGAALVSSAW) is a signal peptide. Residues 19–157 (GGCVEVDSET…DKANRDMASI (139 aa)) are Extracellular-facing. Disulfide bonds link Cys-21/Cys-43 and Cys-40/Cys-121. An Ig-like C2-type domain is found at 22–150 (VEVDSETEAV…KIHIEVVDKA (129 aa)). N-linked (GlcNAc...) asparagine glycosylation is found at Asn-93, Asn-110, Asn-114, and Asn-135. The chain crosses the membrane as a helical span at residues 158 to 179 (VSEIMMYVLIVVLTIWLVAEMV). Topologically, residues 180 to 218 (YCYKKIAAATEAAAQENASEYLAITSESKENCTGVQVAE) are cytoplasmic.

The protein belongs to the sodium channel auxiliary subunit SCN1B (TC 8.A.17) family. In terms of assembly, a voltage-gated sodium (Nav) channel consists of an ion-conducting pore-forming alpha subunit functional on its own that is regulated by one or more beta subunits. Interacts with SCN1A; regulatory subunit of SCN1A/Nav1.1. Interacts with SCN3A; regulatory subunit of SCN3A/Nav1.3. Interacts with SCN4A; regulatory subunit of SCN4A/Nav1.4. Interacts with SCN5A; regulatory subunit of SCN5A/Nav1.5. Interacts with SCN8A; regulatory subunit of SCN8A/Nav1.6. Interacts with SCN9A; regulatory subunit of SCN9A/Nav1.7. Interacts with SCN10A; regulatory subunit of SCN10A/Nav1.8. Interacts with NFASC. Interacts with TMEM65.

The protein resides in the cell membrane. It localises to the perikaryon. It is found in the cell projection. Its subcellular location is the axon. Regulatory subunit of multiple voltage-gated sodium (Nav) channels directly mediating the depolarization of excitable membranes. Navs, also called VGSCs (voltage-gated sodium channels) or VDSCs (voltage-dependent sodium channels), operate by switching between closed and open conformations depending on the voltage difference across the membrane. In the open conformation they allow Na(+) ions to selectively pass through the pore, along their electrochemical gradient. The influx of Na+ ions provokes membrane depolarization, initiating the propagation of electrical signals throughout cells and tissues. The accessory beta subunits participate in localization and functional modulation of the Nav channels. Modulates the activity of SCN1A/Nav1.1, SCN2A/Nav1.2, SCN3A/Nav1.3, SCN4A/Nav1.4, SCN5A/Nav1.5, SCN8A/Nav1.6, SCN9A/Nav1.7 and SCN10A/Nav1.8. This Canis lupus familiaris (Dog) protein is Sodium channel regulatory subunit beta-1.